Here is a 263-residue protein sequence, read N- to C-terminus: MASPAALRPSMGAIMQTCRSAATAPKVAVAVPVRALSTSAALLKRHKYPTARVTRDNSKQRGESALRKSGTRWKLSVSDEPLPEPVPREELPPIQVDENHGLWDFFYDRETVAMAPLEHTKHGRAWTVSELRKKSWDDLHRLWWVCVKERNRIATANWERTKSELGFGLAEANERDRNVKQTMRGIKHVLTERFYAWEDAVKLAEQDPEIDLSNPENPYTPSTFLEAEETAEGAEASETQSTTTEIDPTTIPSSKSQAEAPRV.

Disordered regions lie at residues 51–92 (ARVT…EELP) and 208–263 (PEID…APRV). Basic and acidic residues predominate over residues 53-66 (VTRDNSKQRGESAL). The segment covering 214-223 (NPENPYTPST) has biased composition (polar residues). Residues 233-245 (GAEASETQSTTTE) show a composition bias toward low complexity. A compositionally biased stretch (polar residues) spans 246-257 (IDPTTIPSSKSQ).

This sequence belongs to the universal ribosomal protein uL29 family. In terms of assembly, component of the mitochondrial large ribosomal subunit (mt-LSU). Mature N.crassa 74S mitochondrial ribosomes consist of a small (37S) and a large (54S) subunit. The 37S small subunit contains a 16S ribosomal RNA (16S mt-rRNA) and 32 different proteins. The 54S large subunit contains a 23S rRNA (23S mt-rRNA) and 42 different proteins.

It is found in the mitochondrion. In terms of biological role, component of the mitochondrial ribosome (mitoribosome), a dedicated translation machinery responsible for the synthesis of mitochondrial genome-encoded proteins, including at least some of the essential transmembrane subunits of the mitochondrial respiratory chain. The mitoribosomes are attached to the mitochondrial inner membrane and translation products are cotranslationally integrated into the membrane. In Neurospora crassa (strain ATCC 24698 / 74-OR23-1A / CBS 708.71 / DSM 1257 / FGSC 987), this protein is Large ribosomal subunit protein uL29m (mrpl4).